Consider the following 374-residue polypeptide: N-acetyldiaminopimelate deacetylase (374 aa).

Asp69 is a catalytic residue. The active-site Proton acceptor is Glu128.

The protein belongs to the peptidase M20A family. N-acetyldiaminopimelate deacetylase subfamily.

It carries out the reaction N-acetyl-(2S,6S)-2,6-diaminopimelate + H2O = (2S,6S)-2,6-diaminopimelate + acetate. It functions in the pathway amino-acid biosynthesis; L-lysine biosynthesis via DAP pathway; LL-2,6-diaminopimelate from (S)-tetrahydrodipicolinate (acetylase route): step 3/3. Catalyzes the conversion of N-acetyl-diaminopimelate to diaminopimelate and acetate. This chain is N-acetyldiaminopimelate deacetylase, found in Bacillus velezensis (strain DSM 23117 / BGSC 10A6 / LMG 26770 / FZB42) (Bacillus amyloliquefaciens subsp. plantarum).